A 289-amino-acid chain; its full sequence is Cyclin-dependent kinase 2 homolog (289 aa).

Positions 4–285 constitute a Protein kinase domain; that stretch reads YHGLEKIGEG…AKQAIEHPYF (282 aa). Residues 10-18 and Lys-32 contribute to the ATP site; that span reads IGEGTYGVV. Thr-14 is modified (phosphothreonine). Tyr-15 is subject to Phosphotyrosine. Catalysis depends on Asp-126, which acts as the Proton acceptor. A Phosphothreonine modification is found at Thr-159.

Belongs to the protein kinase superfamily. CMGC Ser/Thr protein kinase family. CDC2/CDKX subfamily. May form a complex composed of at least the catalytic subunit CRK2 and a cyclin. It depends on Mg(2+) as a cofactor.

The protein resides in the cytoplasm. The catalysed reaction is L-seryl-[protein] + ATP = O-phospho-L-seryl-[protein] + ADP + H(+). The enzyme catalyses L-threonyl-[protein] + ATP = O-phospho-L-threonyl-[protein] + ADP + H(+). It carries out the reaction [DNA-directed RNA polymerase] + ATP = phospho-[DNA-directed RNA polymerase] + ADP + H(+). Its activity is regulated as follows. Phosphorylation at Thr-14 or Tyr-15 inactivates the enzyme, while phosphorylation at Thr-159 activates it. Serine/threonine-protein kinase. Involved in the control of the cell cycle. Required for entry into S-phase and mitosis. Probable component of the kinase complex that phosphorylates the repetitive C-terminus of RNA polymerase II. The chain is Cyclin-dependent kinase 2 homolog from Plasmodium yoelii yoelii.